We begin with the raw amino-acid sequence, 183 residues long: MSQYSGKIIFYEGKCFTGRKLEVFGDCDNFQDKGFMNRVNSIRVETGAWICYDHPDFKGQQYILERGEYPDFHRWNGHNDHMGSCKPVRMHGERYRLELFEGCNFTGQCMEFCEDCPFLQGRGWNKNCVNACKVYGDGAWVLYEEPNYRGRMYIVERGDYRSFNDWQSQSANIQSVRRVVNYF.

4 Beta/gamma crystallin 'Greek key' domains span residues 6–46 (GKII…RVET), 47–89 (GAWI…KPVR), 95–136 (YRLE…KVYG), and 138–180 (GAWV…RRVV).

It belongs to the beta/gamma-crystallin family. In terms of assembly, monomer.

Functionally, crystallins are the dominant structural components of the vertebrate eye lens. The protein is Gamma-crystallin N (crygn) of Xenopus tropicalis (Western clawed frog).